The primary structure comprises 2123 residues: Bromodomain adjacent to zinc finger domain protein 2B (2123 aa).

Disordered regions lie at residues 1 to 129 (MESG…VNGT), 144 to 306 (TPAS…LSQQ), 357 to 402 (PSPD…EMGK), 473 to 534 (NENV…HPHP), 546 to 691 (RGTD…RRVA), 756 to 793 (RAMDGRRGRPPNPDRPRAREESRMKRRKGRPPNVGSAE), and 937 to 960 (ARKKAEEKERLKQEKRDEKRLNKE). Low complexity predominate over residues 7-46 (LPSSPASSTTPTSSSAPSVASAVSKSSLSTGAASLSSTAS). Over residues 83–95 (FFPPLLGIPPLFA) the composition is skewed to pro residues. Residues 100 to 116 (NHDSSFHSRTSGKSSRN) are compositionally biased toward polar residues. Low complexity-rich tracts occupy residues 147–157 (SSSMGQNQSTS) and 193–216 (ESSSNSDSDSGTSSDTSSEGISSS). Residues 217 to 243 (DSDDLEEEEEEDQSVEESEDDDSDSET) show a composition bias toward acidic residues. The segment covering 259 to 277 (SDPKTDGQKATEKAQERRT) has biased composition (basic and acidic residues). Composition is skewed to low complexity over residues 291 to 306 (PPFQSQQKQPQVLSQQ) and 366 to 379 (NKNTSEESSSLTSE). Residues 473-502 (NENVSSSTPFSSPVNLSTSGRRAPGSQTPA) are compositionally biased toward polar residues. The segment covering 546 to 559 (RGTDSDVPSSKDSE) has biased composition (basic and acidic residues). Acidic residues predominate over residues 560–587 (DSNEDEEEDDEEEDEEDDEDDESDDSQS). The span at 588–597 (ESDSNSQSDS) shows a compositional bias: low complexity. Residues 598–615 (EGSEDDEEKDQEESDSDT) are compositionally biased toward acidic residues. 2 stretches are compositionally biased toward low complexity: residues 628 to 637 (SSSAKSPPSS) and 671 to 683 (TSSSTLTSTPHSG). The region spanning 690–765 (VADDQELRIP…RAMDGRRGRP (76 aa)) is the MBD domain. The span at 756–778 (RAMDGRRGRPPNPDRPRAREESR) shows a compositional bias: basic and acidic residues. The region spanning 1004 to 1069 (GTTFSDCLMV…LSAAVCDPGL (66 aa)) is the DDT domain. 4 disordered regions span residues 1183-1260 (RDAS…QTAS), 1396-1444 (PPES…KTDA), 1499-1526 (TLVTPQSQPPSKSPSPAPAALLGPSSVQ), and 1588-1614 (FLTSSVASSKSDSPVPPAERPSSAQPV). Positions 1214-1238 (SDYDDDDDDDSDDQADEDEEDEEDK) are enriched in acidic residues. The span at 1239-1248 (DDKKGKKTDI) shows a compositional bias: basic and acidic residues. Positions 1254–1281 (EGDQTASVEELEKQIEKLSKQQSQYRRK) form a coiled coil. Polar residues-rich tracts occupy residues 1408-1422 (NVSTNGGPLSHQNSG) and 1430-1444 (PSATTAQSPVGKTDA). Positions 1505–1515 (SQPPSKSPSPA) are enriched in pro residues. Positions 1588-1600 (FLTSSVASSKSDS) are enriched in low complexity. A PHD-type zinc finger spans residues 1886–1936 (KVYCQICRKGDNEELLLLCDGCDKGCHTYCHRPKITTIPDGDWFCPACISK). The interval 1949–2013 (VKGKKTNDSK…AESTTSIKKP (65 aa)) is disordered. The span at 1984–1995 (GSKELKKRKMEE) shows a compositional bias: basic and acidic residues. Polar residues predominate over residues 1996 to 2010 (TTSLNLSKAESTTSI). A Bromo domain is found at 2015–2119 (KDESRDLALC…KYFEKKWTDT (105 aa)).

Belongs to the WAL family. Component of the BRF-1 ISWI chromatin remodeling complex, at least composed of SMARCA1 and BAZ2B, which regulates the spacing of histone octamers on the DNA template to facilitate access to DNA. Within the BRF-1 ISWI chromatin remodeling complex interacts with SMARCA1; the interaction is direct. Component of the BRF-5 ISWI chromatin remodeling complex, at least composed of SMARCA5/SNF2H and BAZ2B, which regulates the spacing of histone octamers on the DNA template to facilitate access to DNA. Within the BRF-5 ISWI chromatin remodeling complex interacts with SMARCA5/SNF2H; the interaction is direct. Interacts with acetylated lysine residues on histone H1.4, H2A, H2B, H3 and H4 (in vitro). Interacts with EHMT1.

It is found in the nucleus. Functionally, regulatory subunit of the ATP-dependent BRF-1 and BRF-5 ISWI chromatin remodeling complexes, which form ordered nucleosome arrays on chromatin and facilitate access to DNA during DNA-templated processes such as DNA replication, transcription, and repair. Both complexes regulate the spacing of nucleosomes along the chromatin and have the ability to slide mononucleosomes to the center of a DNA template. The BRF-1 ISWI chromatin remodeling complex has a lower ATP hydrolysis rate than the BRF-5 ISWI chromatin remodeling complex. Chromatin reader protein, involved in positively modulating the rate of age-related behavioral deterioration. Represses the expression of mitochondrial function-related genes, perhaps by occupying their promoter regions, working in concert with histone methyltransferase EHMT1. The chain is Bromodomain adjacent to zinc finger domain protein 2B from Mus musculus (Mouse).